Reading from the N-terminus, the 399-residue chain is MGMGRYQKSATSGVSARWVFVLCISSFLLGVLVVNRLLASFETVDGIERASPEQNDQSRSLNPLVDCESKEGDILSRVSHTHDVIKTLDKTISSLEVELATARAARSDGRDGSPAVAKTVADQSKIRPRMFFVMGIMTAFSSRKRRDSIRGTWLPKGDELKRLETEKGIIMRFVIGHSSSPGGVLDHTIEAEEEQHKDFFRLNHIEGYHELSSKTQIYFSSAVAKWDADFYIKVDDDVHVNLGMLGSTLARHRSKPRVYIGCMKSGPVLAQKGVKYHEPEYWKFGEEGNKYFRHATGQIYAISKDLATYISVNRQLLHKYANEDVSLGSWFIGLDVEHIDDRSLCCGTPLDCEWKGQAGNPCAASFDWSCSGICKSVDRMLEVHQRCGEGDGAIWHSSF.

Residues 1-12 (MGMGRYQKSATS) are Cytoplasmic-facing. The helical; Signal-anchor for type II membrane protein transmembrane segment at 13-35 (GVSARWVFVLCISSFLLGVLVVN) threads the bilayer. At 36–399 (RLLASFETVD…GDGAIWHSSF (364 aa)) the chain is on the lumenal side.

It belongs to the glycosyltransferase 31 family. In terms of assembly, interacts with GALT29A. It depends on Mn(2+) as a cofactor.

It is found in the golgi apparatus membrane. It participates in protein modification; protein glycosylation. In terms of biological role, beta-galactosyltransferase involved in elongation of beta-1,6-linked galactan side chains on arabinogalactan proteins. Required for the progression of embryogenesis beyond the globular stage. Beta-galactosyltransferase involved in the biosynthesis of type II arabinogalactan. Transfers galactose from UDP-galactose to a mixture of various oligosaccharides derived from arabinogalactan proteins. Forms a complex with GALT29A that can work cooperatively to enhance the activities of adding galactose residues at O6 positions to beta-1,6-linked galactan and beta-1,3-linked galactan. This Arabidopsis thaliana (Mouse-ear cress) protein is Beta-1,6-galactosyltransferase GALT31A.